Reading from the N-terminus, the 383-residue chain is Chaperone protein DnaJ (383 aa).

Residues 6–70 enclose the J domain; the sequence is DYYDVLGVGR…QKRAAYDQYG (65 aa). A CR-type zinc finger spans residues 140–222; that stretch reads GKETKISYSR…CHGTGREEER (83 aa). Zn(2+)-binding residues include C153, C156, C170, C173, C196, C199, C210, and C213. CXXCXGXG motif repeat units lie at residues 153–160, 170–177, 196–203, and 210–217; these read CHTCHGSG, CHKCHGAG, CDVCGGTG, and CDTCHGTG.

It belongs to the DnaJ family. In terms of assembly, homodimer. It depends on Zn(2+) as a cofactor.

The protein resides in the cytoplasm. Participates actively in the response to hyperosmotic and heat shock by preventing the aggregation of stress-denatured proteins and by disaggregating proteins, also in an autonomous, DnaK-independent fashion. Unfolded proteins bind initially to DnaJ; upon interaction with the DnaJ-bound protein, DnaK hydrolyzes its bound ATP, resulting in the formation of a stable complex. GrpE releases ADP from DnaK; ATP binding to DnaK triggers the release of the substrate protein, thus completing the reaction cycle. Several rounds of ATP-dependent interactions between DnaJ, DnaK and GrpE are required for fully efficient folding. Also involved, together with DnaK and GrpE, in the DNA replication of plasmids through activation of initiation proteins. The protein is Chaperone protein DnaJ of Latilactobacillus sakei subsp. sakei (strain 23K) (Lactobacillus sakei subsp. sakei).